The primary structure comprises 339 residues: Phenylalanine--tRNA ligase alpha subunit (339 aa).

Glutamate 250 lines the Mg(2+) pocket.

The protein belongs to the class-II aminoacyl-tRNA synthetase family. Phe-tRNA synthetase alpha subunit type 1 subfamily. As to quaternary structure, tetramer of two alpha and two beta subunits. Mg(2+) serves as cofactor.

It is found in the cytoplasm. It catalyses the reaction tRNA(Phe) + L-phenylalanine + ATP = L-phenylalanyl-tRNA(Phe) + AMP + diphosphate + H(+). This chain is Phenylalanine--tRNA ligase alpha subunit, found in Christiangramia forsetii (strain DSM 17595 / CGMCC 1.15422 / KT0803) (Gramella forsetii).